A 173-amino-acid polypeptide reads, in one-letter code: Putative 4-hydroxy-4-methyl-2-oxoglutarate aldolase (173 aa).

Residues 89-92 (GGNL) and Arg-111 contribute to the substrate site. Position 112 (Asp-112) interacts with a divalent metal cation.

It belongs to the class II aldolase/RraA-like family. Homotrimer. It depends on a divalent metal cation as a cofactor.

It carries out the reaction 4-hydroxy-4-methyl-2-oxoglutarate = 2 pyruvate. It catalyses the reaction oxaloacetate + H(+) = pyruvate + CO2. Functionally, catalyzes the aldol cleavage of 4-hydroxy-4-methyl-2-oxoglutarate (HMG) into 2 molecules of pyruvate. Also contains a secondary oxaloacetate (OAA) decarboxylase activity due to the common pyruvate enolate transition state formed following C-C bond cleavage in the retro-aldol and decarboxylation reactions. This Albidiferax ferrireducens (strain ATCC BAA-621 / DSM 15236 / T118) (Rhodoferax ferrireducens) protein is Putative 4-hydroxy-4-methyl-2-oxoglutarate aldolase.